The following is a 61-amino-acid chain: Short neurotoxin 1 (61 aa).

Intrachain disulfides connect C3–C23, C17–C40, C42–C53, and C54–C59.

This sequence belongs to the three-finger toxin family. Short-chain subfamily. Type I alpha-neurotoxin sub-subfamily. As to expression, expressed by the venom gland.

It is found in the secreted. In terms of biological role, binds to muscle nicotinic acetylcholine receptor (nAChR) and inhibit acetylcholine from binding to the receptor, thereby impairing neuromuscular transmission. Functionally, produces peripheral paralysis by blocking neuromuscular transmission at the postsynaptic site. Binds to the muscular nicotinic acetylcholine receptor. The chain is Short neurotoxin 1 from Naja annulifera (Banded Egyptian cobra).